A 441-amino-acid polypeptide reads, in one-letter code: Fibroleukin (441 aa).

A signal peptide spans 1–15; that stretch reads MKLANWCWLSSTVLA. The N-linked (GlcNAc...) asparagine glycan is linked to N25. Positions 73 to 167 form a coiled coil; it reads SRIEEVFKEV…LEKLNLVNMN (95 aa). Positions 102–128 are disordered; it reads QADDSRDPGRNGLLLPGTGAPGETGDN. N-linked (GlcNAc...) asparagine glycosylation is found at N179, N237, N265, and N338. Residues 206 to 438 enclose the Fibrinogen C-terminal domain; sequence VQQHLIYKDC…EVKMMIRPKH (233 aa).

In terms of assembly, homotetramer; disulfide-linked.

It localises to the secreted. Its function is as follows. May play a role in physiologic lymphocyte functions at mucosal sites. In Bos taurus (Bovine), this protein is Fibroleukin (FGL2).